The sequence spans 852 residues: MSSVNPIQIPSRLPLLLTHESVLLPGSTMRTSVDTARNLQLVRSRLLKGTSLQSTILGVIPNTPDPASDSQDLPPLHRIGTAALAVQVVGSNWPKPHYTLLITGLCRFQIVQVLKEKPYPVAEVEQLDRLEEFPNTCKTREELGELSEQFYRYSVQLVEMLDMSVPAVAKLRRLLDSLPREALPDILTSIIRTSNKEKLQILDAVSLEDRFKMTIPLLVRQIEGLKLLQKTRKPKQDDDKRVIAIRPIRRITHIPGALEDEEEEEDNDDIVMLEKKIRTSSMPEQAHKVCVKEIKRLKKMPQSMPEYALTRNYLELMVELPWNKSTTDRLDIRAARILLDNDHYAMEKLKRRVLEYLAVRQLKNNLKGPILCFVGPPGVGKTSVGRSVAKTLGREFHRIALGGVCDQSDIRGHRRTYVGSMPGRIINGLKTVGVNNPVFLLDEVDKLGKSLQGDPAAALLEVLDPEQNHNFTDHYLNVAFDLSQVLFIATANTTATIPPALLDRMEIIQVPGYTQEEKIEIAHRHLIPKQLEQHGLTPQQIQIPQLTTLAIITRYTREAGVRSLDRKFGAICRAVAVKVAEGQHKEAKLDRSDVADGEGCKEHVLEDAKPESIGDAADLALPPEMPILIDSHALKDILGPPLYELEVSERLSQPGVAIGLAWTPLGGKIMFVEASRMDGEGQLTLTGQLGDVMKESAHLAISWLRSNAKKYHLTNAFGSFDLLDNTDIHLHFPAGAVTKDGPSAGVTIVTCLASLFSGRLVRSDVAMTGEITLRGLVLPVGGIKDKVLAAHRAGLKHIIIPQRNEKDLEEIPSNVKQDLSFVTASCLDEVLNAAFDGGFTVKTRPGLTDSKL.

Position 2 is an N-acetylserine (Ser-2). The region spanning 13–222 (LPLLLTHESV…MTIPLLVRQI (210 aa)) is the Lon N-terminal domain. 375 to 382 (GPPGVGKT) is an ATP binding site. Positions 651–837 (LSQPGVAIGL…DEVLNAAFDG (187 aa)) constitute a Lon proteolytic domain. Active-site residues include Ser-743 and Lys-786. The Microbody targeting signal signature appears at 850 to 852 (SKL).

The protein belongs to the peptidase S16 family. Interacts with PEX5. Interacts with TYSND1. May interact with enzymes involved in beta-oxidation of fatty acids, including ACOX1/AOX.

The protein resides in the peroxisome matrix. The catalysed reaction is Hydrolysis of proteins in presence of ATP.. Its function is as follows. ATP-dependent serine protease that mediates the selective degradation of misfolded and unassembled polypeptides in the peroxisomal matrix. Necessary for type 2 peroxisome targeting signal (PTS2)-containing protein processing and facilitates peroxisome matrix protein import. May indirectly regulate peroxisomal fatty acid beta-oxidation through degradation of the self-processed forms of TYSND1. This Rattus norvegicus (Rat) protein is Lon protease homolog 2, peroxisomal (Lonp2).